A 350-amino-acid chain; its full sequence is Galactokinase (350 aa).

14-17 contacts substrate; that stretch reads EHTD. ATP-binding positions include Ser46 and 98 to 104; that span reads GSGLSSS. Residues Ser104 and Glu136 each contribute to the Mg(2+) site. Asp148 (proton acceptor) is an active-site residue. Substrate is bound at residue Tyr197.

Belongs to the GHMP kinase family. GalK subfamily.

The protein localises to the cytoplasm. It carries out the reaction alpha-D-galactose + ATP = alpha-D-galactose 1-phosphate + ADP + H(+). Its pathway is carbohydrate metabolism; galactose metabolism. Functionally, catalyzes the transfer of the gamma-phosphate of ATP to D-galactose to form alpha-D-galactose-1-phosphate (Gal-1-P). In Thermococcus kodakarensis (strain ATCC BAA-918 / JCM 12380 / KOD1) (Pyrococcus kodakaraensis (strain KOD1)), this protein is Galactokinase.